A 388-amino-acid chain; its full sequence is Formate-dependent phosphoribosylglycinamide formyltransferase (388 aa).

N(1)-(5-phospho-beta-D-ribosyl)glycinamide is bound by residues 11 to 12 and Glu-71; that span reads EL. Residues Arg-103, Lys-144, 149 to 154, 184 to 187, and Glu-192 each bind ATP; these read SSGKGQ and EEFI. The 193-residue stretch at 108-300 folds into the ATP-grasp domain; sequence DLAAKELGLK…EFELHLRAVL (193 aa). Mg(2+)-binding residues include Glu-257 and Glu-270. N(1)-(5-phospho-beta-D-ribosyl)glycinamide contacts are provided by residues Asp-277, Lys-349, and 356–357; that span reads RR.

Belongs to the PurK/PurT family. Homodimer.

The enzyme catalyses N(1)-(5-phospho-beta-D-ribosyl)glycinamide + formate + ATP = N(2)-formyl-N(1)-(5-phospho-beta-D-ribosyl)glycinamide + ADP + phosphate + H(+). Its pathway is purine metabolism; IMP biosynthesis via de novo pathway; N(2)-formyl-N(1)-(5-phospho-D-ribosyl)glycinamide from N(1)-(5-phospho-D-ribosyl)glycinamide (formate route): step 1/1. In terms of biological role, involved in the de novo purine biosynthesis. Catalyzes the transfer of formate to 5-phospho-ribosyl-glycinamide (GAR), producing 5-phospho-ribosyl-N-formylglycinamide (FGAR). Formate is provided by PurU via hydrolysis of 10-formyl-tetrahydrofolate. The protein is Formate-dependent phosphoribosylglycinamide formyltransferase of Bacteroides fragilis (strain ATCC 25285 / DSM 2151 / CCUG 4856 / JCM 11019 / LMG 10263 / NCTC 9343 / Onslow / VPI 2553 / EN-2).